A 334-amino-acid polypeptide reads, in one-letter code: Probable 2-ketogluconate reductase (334 aa).

NAD(+)-binding positions include Arg164–Ile165, Ala244–Arg246, and Asp270. The active site involves Arg246. Glu275 is a catalytic residue. Catalysis depends on His294, which acts as the Proton donor. Position 294-297 (His294–Thr297) interacts with NAD(+).

Belongs to the D-isomer specific 2-hydroxyacid dehydrogenase family.

The protein localises to the cytoplasm. The catalysed reaction is D-gluconate + NADP(+) = 2-dehydro-D-gluconate + NADPH + H(+). In terms of biological role, catalyzes the NADPH-dependent reduction of 2,5-diketo-D-gluconate (25DKG) to 5-keto-D-gluconate (5KDG), 2-keto-D-gluconate (2KDG) to D-gluconate, and 2-keto-L-gulonate (2KLG) to L-idonate (IA). The chain is Probable 2-ketogluconate reductase (tkrA) from Dictyostelium discoideum (Social amoeba).